A 538-amino-acid chain; its full sequence is Lipid scramblase CLPTM1L (538 aa).

At 1–10 (MWSGRSSFTS) the chain is on the cytoplasmic side. Residues 11–31 (LVVGVFVVYVVHTCWVMYGIV) form a helical membrane-spanning segment. Residues 32–284 (YTRPCSGHGR…VKGIFVDTNL (253 aa)) lie on the Extracellular side of the membrane. N-linked (GlcNAc...) asparagine glycosylation is found at Asn-91 and Asn-101. Residues 285 to 305 (YFLALTFFVAAFHLLFDFLAF) form a helical membrane-spanning segment. The Cytoplasmic segment spans residues 306-324 (KNDISFWKKKKSMIGMSTK). Residues 325-341 (AVLWRCFSTVVIFLFLL) form a helical membrane-spanning segment. At 342 to 402 (DEQTSLPVLV…TEEYDAQAMK (61 aa)) the chain is on the extracellular side. A helical membrane pass occupies residues 403-423 (YLSYLLYPLCIGGAIYSLLNI). The Cytoplasmic segment spans residues 424–428 (KYKSW). The chain crosses the membrane as a helical span at residues 429 to 449 (YSWLINSFVNGVYAFGFLFML). At 450–538 (PQLFVNYKMK…DTPQRKPHTD (89 aa)) the chain is on the extracellular side.

It belongs to the CLPTM1 family.

Its subcellular location is the endoplasmic reticulum membrane. It catalyses the reaction a 6-(alpha-D-glucosaminyl)-1-(1,2-diacyl-sn-glycero-3-phospho)-1D-myo-inositol(in) = a 6-(alpha-D-glucosaminyl)-1-(1,2-diacyl-sn-glycero-3-phospho)-1D-myo-inositol(out). The catalysed reaction is 6-(alpha-D-glucosaminyl)-(1-octadecanoyl,2-(9Z)-octadecenoyl-sn-glycero-3-phospho)-1D-myo-inositol(in) = 6-(alpha-D-glucosaminyl)-(1-octadecanoyl,2-(9Z)-octadecenoyl-sn-glycero-3-phospho)-1D-myo-inositol(out). The enzyme catalyses a 1,2-diacyl-sn-glycero-3-phospho-(1D-myo-inositol)(in) = a 1,2-diacyl-sn-glycero-3-phospho-(1D-myo-inositol)(out). It carries out the reaction a 1,2-diacyl-sn-glycero-3-phosphocholine(in) = a 1,2-diacyl-sn-glycero-3-phosphocholine(out). It catalyses the reaction a 1,2-diacyl-sn-glycero-3-phosphoethanolamine(in) = a 1,2-diacyl-sn-glycero-3-phosphoethanolamine(out). In terms of biological role, scramblase that mediates the translocation of glucosaminylphosphatidylinositol (alpha-D-GlcN-(1-6)-(1,2-diacyl-sn-glycero-3-phospho)-1D-myo-inositol, GlcN-PI) across the endoplasmic reticulum (ER) membrane, from the cytosolic leaflet to the luminal leaflet of the ER membrane, where it participates in the biosynthesis of glycosylphosphatidylinositol (GPI). GPI is a lipid glycoconjugate involved in post-translational modification of proteins. Can also translocate 1,2-diacyl-sn-glycero-3-phospho-(1D-myo-inositol) (phosphatidylinositol or PI), as well as several other phospholipids (1,2-diacyl-sn-glycero-3-phosphocholine, 1,2-diacyl-sn-glycero-3-phosphoethanolamine), and N-acetylglucosaminylphosphatidylinositol (GlcNAc-PI) in vitro. This is Lipid scramblase CLPTM1L (CLPTM1L) from Bos taurus (Bovine).